We begin with the raw amino-acid sequence, 395 residues long: MSRQSRSRFPSPTLITKSEDLAALCTTLRREPYVTIDTEFMRERTYWPELCVVQLGGADCVAVIDTLAPELDLAPVGELLADPAVIKVFHACRQDIEIFLLRFGSIPQPMFDTQVAAMVAGFGDQVGYDTLVSSLTGGHIDKAHRFSDWSRRPLSQAQIDYAAADVTHLRGVYETLRDRLEKEGRLAWVSEEMAVLNDPATYRTDPVTMWERLRPRTNNRRYLGLLRAICAWREVEAQRLNIPRQRLIKDESLLEIAATSPADAESLAQARGVGRGFAEGRSGATLLAAIAEARGLPDADLPAIPRSRESGARPSPALVSLLKVLLAAKSEQHNVAPKLLASSEDLDRLATEAEPDVPALTGWRRDVFGQDALALKNGEICLGVDGKQIKLITTG.

The 3'-5' exonuclease domain maps to 14-181; sequence LITKSEDLAA…VYETLRDRLE (168 aa). The region spanning 219–300 is the HRDC domain; sequence NRRYLGLLRA…AEARGLPDAD (82 aa).

Belongs to the RNase D family. Requires a divalent metal cation as cofactor.

It localises to the cytoplasm. It catalyses the reaction Exonucleolytic cleavage that removes extra residues from the 3'-terminus of tRNA to produce 5'-mononucleotides.. Exonuclease involved in the 3' processing of various precursor tRNAs. Initiates hydrolysis at the 3'-terminus of an RNA molecule and releases 5'-mononucleotides. In Granulibacter bethesdensis (strain ATCC BAA-1260 / CGDNIH1), this protein is Ribonuclease D.